Here is a 454-residue protein sequence, read N- to C-terminus: Tubulin gamma chain (454 aa).

Ala-142–Gly-148 lines the GTP pocket.

This sequence belongs to the tubulin family.

It is found in the cytoplasm. It localises to the cytoskeleton. The protein localises to the microtubule organizing center. Its subcellular location is the spindle pole body. Its function is as follows. Tubulin is the major constituent of microtubules. The gamma chain is found at microtubule organizing centers (MTOC) such as the spindle pole or the centrosome, suggesting that it is involved in the minus-end nucleation of microtubule assembly. Interacts physically with beta-tubulin and is involved in microtubule function. The protein is Tubulin gamma chain (mipA) of Emericella nidulans (strain FGSC A4 / ATCC 38163 / CBS 112.46 / NRRL 194 / M139) (Aspergillus nidulans).